Reading from the N-terminus, the 275-residue chain is 2-dehydro-3-deoxyphosphooctonate aldolase (275 aa).

This sequence belongs to the KdsA family.

Its subcellular location is the cytoplasm. It carries out the reaction D-arabinose 5-phosphate + phosphoenolpyruvate + H2O = 3-deoxy-alpha-D-manno-2-octulosonate-8-phosphate + phosphate. Its pathway is carbohydrate biosynthesis; 3-deoxy-D-manno-octulosonate biosynthesis; 3-deoxy-D-manno-octulosonate from D-ribulose 5-phosphate: step 2/3. It participates in bacterial outer membrane biogenesis; lipopolysaccharide biosynthesis. The sequence is that of 2-dehydro-3-deoxyphosphooctonate aldolase from Francisella tularensis subsp. novicida (strain U112).